Here is a 158-residue protein sequence, read N- to C-terminus: Probable inactive acireductone dioxygenase 2 (158 aa).

This sequence belongs to the acireductone dioxygenase (ARD) family.

It localises to the cytoplasm. The protein localises to the nucleus. In terms of biological role, probable inactive acireductone dioxygenase. This is Probable inactive acireductone dioxygenase 2 from Caenorhabditis elegans.